Reading from the N-terminus, the 156-residue chain is Phosphopantetheine adenylyltransferase (156 aa).

Thr-9 provides a ligand contact to substrate. ATP is bound by residues 9-10 (TF) and His-17. Substrate is bound by residues Lys-41, Leu-73, and Arg-87. Residues 88 to 90 (GVR), Glu-98, and 123 to 129 (WAFVSST) contribute to the ATP site.

The protein belongs to the bacterial CoaD family. In terms of assembly, homohexamer. Requires Mg(2+) as cofactor.

It localises to the cytoplasm. The enzyme catalyses (R)-4'-phosphopantetheine + ATP + H(+) = 3'-dephospho-CoA + diphosphate. Its pathway is cofactor biosynthesis; coenzyme A biosynthesis; CoA from (R)-pantothenate: step 4/5. Its function is as follows. Reversibly transfers an adenylyl group from ATP to 4'-phosphopantetheine, yielding dephospho-CoA (dPCoA) and pyrophosphate. The chain is Phosphopantetheine adenylyltransferase from Haemophilus influenzae (strain 86-028NP).